The primary structure comprises 409 residues: Elongation factor Tu (409 aa).

Residues 10–214 form the tr-type G domain; sequence KPHVNIGTIG…EVDAYIPEPE (205 aa). Residues 19 to 26 form a G1 region; it reads GHVDHGKT. 19 to 26 contributes to the GTP binding site; that stretch reads GHVDHGKT. Mg(2+) is bound at residue Thr-26. The segment at 60-64 is G2; the sequence is GITIN. The segment at 81–84 is G3; that stretch reads DCPG. GTP-binding positions include 81 to 85 and 136 to 139; these read DCPGH and NKQD. Positions 136–139 are G4; the sequence is NKQD. The G5 stretch occupies residues 174–176; that stretch reads SAL.

The protein belongs to the TRAFAC class translation factor GTPase superfamily. Classic translation factor GTPase family. EF-Tu/EF-1A subfamily. Monomer.

Its subcellular location is the cytoplasm. It catalyses the reaction GTP + H2O = GDP + phosphate + H(+). Its function is as follows. GTP hydrolase that promotes the GTP-dependent binding of aminoacyl-tRNA to the A-site of ribosomes during protein biosynthesis. The protein is Elongation factor Tu of Rippkaea orientalis (strain PCC 8801 / RF-1) (Cyanothece sp. (strain PCC 8801)).